A 238-amino-acid polypeptide reads, in one-letter code: Ribonuclease M (238 aa).

Disulfide bonds link Cys-5-Cys-22, Cys-13-Cys-58, Cys-21-Cys-126, Cys-66-Cys-118, and Cys-191-Cys-225. The active site involves His-51. N-linked (GlcNAc...) asparagine glycosylation occurs at Asn-74. Active-site residues include Glu-111 and His-115.

Belongs to the RNase T2 family.

It carries out the reaction a ribonucleotidyl-ribonucleotide-RNA + H2O = a 3'-end 3'-phospho-ribonucleotide-RNA + a 5'-end dephospho-ribonucleoside-RNA + H(+). Functionally, this is a base non-specific and adenylic acid preferential ribonuclease. The protein is Ribonuclease M of Aspergillus phoenicis (Aspergillus saitoi).